Here is a 297-residue protein sequence, read N- to C-terminus: Acetyl-coenzyme A carboxylase carboxyl transferase subunit beta (297 aa).

A disordered region spans residues 1–23; that stretch reads MSWIERILGRTSSSSSSSKSKVP. Residues 26 to 295 form the CoA carboxyltransferase N-terminal domain; that stretch reads VWTKCTSCEQ…PFKTAELIVE (270 aa). 4 residues coordinate Zn(2+): cysteine 30, cysteine 33, cysteine 49, and cysteine 52. The segment at 30–52 adopts a C4-type zinc-finger fold; it reads CTSCEQVLYSEELKRNMHVCPKC.

It belongs to the AccD/PCCB family. As to quaternary structure, acetyl-CoA carboxylase is a heterohexamer composed of biotin carboxyl carrier protein (AccB), biotin carboxylase (AccC) and two subunits each of ACCase subunit alpha (AccA) and ACCase subunit beta (AccD). Zn(2+) is required as a cofactor.

It localises to the cytoplasm. It carries out the reaction N(6)-carboxybiotinyl-L-lysyl-[protein] + acetyl-CoA = N(6)-biotinyl-L-lysyl-[protein] + malonyl-CoA. Its pathway is lipid metabolism; malonyl-CoA biosynthesis; malonyl-CoA from acetyl-CoA: step 1/1. Component of the acetyl coenzyme A carboxylase (ACC) complex. Biotin carboxylase (BC) catalyzes the carboxylation of biotin on its carrier protein (BCCP) and then the CO(2) group is transferred by the transcarboxylase to acetyl-CoA to form malonyl-CoA. This chain is Acetyl-coenzyme A carboxylase carboxyl transferase subunit beta, found in Actinobacillus pleuropneumoniae serotype 7 (strain AP76).